The following is a 368-amino-acid chain: Chaperone protein DnaJ (368 aa).

The J domain occupies 5-69 (DYYEVLGVAR…NQRARYDQFG (65 aa)). The CR-type zinc finger occupies 125-207 (GVEKVITIPV…CRGAGRVRKN (83 aa)). Residues C138, C141, C155, C158, C181, C184, C195, and C198 each coordinate Zn(2+). CXXCXGXG motif repeat units lie at residues 138 to 145 (CGTCHGSG), 155 to 162 (CKRCGGSG), 181 to 188 (CSTCHGRG), and 195 to 202 (CETCRGAG).

This sequence belongs to the DnaJ family. In terms of assembly, homodimer. The cofactor is Zn(2+).

It localises to the cytoplasm. Functionally, participates actively in the response to hyperosmotic and heat shock by preventing the aggregation of stress-denatured proteins and by disaggregating proteins, also in an autonomous, DnaK-independent fashion. Unfolded proteins bind initially to DnaJ; upon interaction with the DnaJ-bound protein, DnaK hydrolyzes its bound ATP, resulting in the formation of a stable complex. GrpE releases ADP from DnaK; ATP binding to DnaK triggers the release of the substrate protein, thus completing the reaction cycle. Several rounds of ATP-dependent interactions between DnaJ, DnaK and GrpE are required for fully efficient folding. Also involved, together with DnaK and GrpE, in the DNA replication of plasmids through activation of initiation proteins. The protein is Chaperone protein DnaJ of Exiguobacterium sibiricum (strain DSM 17290 / CCUG 55495 / CIP 109462 / JCM 13490 / 255-15).